We begin with the raw amino-acid sequence, 216 residues long: Homologous-pairing protein 2 (216 aa).

This sequence belongs to the HOP2 family. As to quaternary structure, interacts with mcp7.

The protein resides in the nucleus. Required for proper homologous pairing and efficient cross-over and intragenic recombination during meiosis. Acts indirectly in a process facilitating homologous recombination. Acts during mid- to late-horse-tail period. This is Homologous-pairing protein 2 (meu13) from Schizosaccharomyces pombe (strain 972 / ATCC 24843) (Fission yeast).